Here is a 1036-residue protein sequence, read N- to C-terminus: DNA-directed RNA polymerase subunit beta (1036 aa).

This sequence belongs to the RNA polymerase beta chain family. As to quaternary structure, in plastids the minimal PEP RNA polymerase catalytic core is composed of four subunits: alpha, beta, beta', and beta''. When a (nuclear-encoded) sigma factor is associated with the core the holoenzyme is formed, which can initiate transcription.

It localises to the plastid. It is found in the chloroplast. The enzyme catalyses RNA(n) + a ribonucleoside 5'-triphosphate = RNA(n+1) + diphosphate. In terms of biological role, DNA-dependent RNA polymerase catalyzes the transcription of DNA into RNA using the four ribonucleoside triphosphates as substrates. The sequence is that of DNA-directed RNA polymerase subunit beta from Cyanidioschyzon merolae (strain NIES-3377 / 10D) (Unicellular red alga).